Here is a 445-residue protein sequence, read N- to C-terminus: Phosphoglucosamine mutase (445 aa).

Residue Ser100 is the Phosphoserine intermediate of the active site. Positions 100, 240, 242, and 244 each coordinate Mg(2+). Ser100 is subject to Phosphoserine.

It belongs to the phosphohexose mutase family. Mg(2+) serves as cofactor. Post-translationally, activated by phosphorylation.

It carries out the reaction alpha-D-glucosamine 1-phosphate = D-glucosamine 6-phosphate. Functionally, catalyzes the conversion of glucosamine-6-phosphate to glucosamine-1-phosphate. The chain is Phosphoglucosamine mutase from Pelotomaculum thermopropionicum (strain DSM 13744 / JCM 10971 / SI).